The sequence spans 494 residues: Alpha-amylase-related protein (494 aa).

Residues 1 to 20 form the signal peptide; sequence MFKFATAVILCLVAASSTLA. Q21 is modified (pyrrolidone carboxylic acid). A disulfide bridge connects residues C48 and C104. 3 residues coordinate Ca(2+): N118, Q169, and D178. An intrachain disulfide couples C157 to C171. Chloride is bound at residue R206. Catalysis depends on D208, which acts as the Nucleophile. Ca(2+) is bound at residue H212. The Proton donor role is filled by E245. N308 and R343 together coordinate chloride. 3 disulfides stabilise this stretch: C376-C382, C418-C441, and C448-C460.

Belongs to the glycosyl hydrolase 13 family. In terms of assembly, monomer. Ca(2+) serves as cofactor. The cofactor is chloride.

Its subcellular location is the secreted. The catalysed reaction is Endohydrolysis of (1-&gt;4)-alpha-D-glucosidic linkages in polysaccharides containing three or more (1-&gt;4)-alpha-linked D-glucose units.. This chain is Alpha-amylase-related protein (Amyrel), found in Drosophila bipectinata (Fruit fly).